Consider the following 338-residue polypeptide: Holliday junction branch migration complex subunit RuvB (338 aa).

Residues 1–22 (MVDDERVVSPETADDHEDSVEK) form a disordered region. The large ATPase domain (RuvB-L) stretch occupies residues 4 to 185 (DERVVSPETA…FGIVEHMAYY (182 aa)). Residues Leu-24, Arg-25, Gly-66, Lys-69, Thr-70, Thr-71, 132 to 134 (EDF), Arg-175, Tyr-185, and Arg-222 contribute to the ATP site. Thr-70 is a Mg(2+) binding site. Residues 186 to 257 (ETTDLQEIVL…IVDHALDLLR (72 aa)) form a small ATPAse domain (RuvB-S) region. The tract at residues 260-338 (SAGLDATDIK…HLGRTMPDNN (79 aa)) is head domain (RuvB-H). Residues Arg-315 and Arg-320 each contribute to the DNA site.

The protein belongs to the RuvB family. Homohexamer. Forms an RuvA(8)-RuvB(12)-Holliday junction (HJ) complex. HJ DNA is sandwiched between 2 RuvA tetramers; dsDNA enters through RuvA and exits via RuvB. An RuvB hexamer assembles on each DNA strand where it exits the tetramer. Each RuvB hexamer is contacted by two RuvA subunits (via domain III) on 2 adjacent RuvB subunits; this complex drives branch migration. In the full resolvosome a probable DNA-RuvA(4)-RuvB(12)-RuvC(2) complex forms which resolves the HJ.

Its subcellular location is the cytoplasm. It catalyses the reaction ATP + H2O = ADP + phosphate + H(+). In terms of biological role, the RuvA-RuvB-RuvC complex processes Holliday junction (HJ) DNA during genetic recombination and DNA repair, while the RuvA-RuvB complex plays an important role in the rescue of blocked DNA replication forks via replication fork reversal (RFR). RuvA specifically binds to HJ cruciform DNA, conferring on it an open structure. The RuvB hexamer acts as an ATP-dependent pump, pulling dsDNA into and through the RuvAB complex. RuvB forms 2 homohexamers on either side of HJ DNA bound by 1 or 2 RuvA tetramers; 4 subunits per hexamer contact DNA at a time. Coordinated motions by a converter formed by DNA-disengaged RuvB subunits stimulates ATP hydrolysis and nucleotide exchange. Immobilization of the converter enables RuvB to convert the ATP-contained energy into a lever motion, pulling 2 nucleotides of DNA out of the RuvA tetramer per ATP hydrolyzed, thus driving DNA branch migration. The RuvB motors rotate together with the DNA substrate, which together with the progressing nucleotide cycle form the mechanistic basis for DNA recombination by continuous HJ branch migration. Branch migration allows RuvC to scan DNA until it finds its consensus sequence, where it cleaves and resolves cruciform DNA. This chain is Holliday junction branch migration complex subunit RuvB, found in Levilactobacillus brevis (strain ATCC 367 / BCRC 12310 / CIP 105137 / JCM 1170 / LMG 11437 / NCIMB 947 / NCTC 947) (Lactobacillus brevis).